The chain runs to 182 residues: Probable nicotinate-nucleotide adenylyltransferase (182 aa).

Belongs to the NadD family.

It catalyses the reaction nicotinate beta-D-ribonucleotide + ATP + H(+) = deamido-NAD(+) + diphosphate. The protein operates within cofactor biosynthesis; NAD(+) biosynthesis; deamido-NAD(+) from nicotinate D-ribonucleotide: step 1/1. In terms of biological role, catalyzes the reversible adenylation of nicotinate mononucleotide (NaMN) to nicotinic acid adenine dinucleotide (NaAD). The polypeptide is Probable nicotinate-nucleotide adenylyltransferase (Aliarcobacter butzleri (strain RM4018) (Arcobacter butzleri)).